Consider the following 332-residue polypeptide: Fructose-1,6-bisphosphatase class 1 (332 aa).

Residues E92, D113, L115, and D116 each coordinate Mg(2+). Residues 116–119, N209, Y242, and K272 each bind substrate; that span reads DGSS. E278 lines the Mg(2+) pocket.

This sequence belongs to the FBPase class 1 family. As to quaternary structure, homotetramer. It depends on Mg(2+) as a cofactor.

It is found in the cytoplasm. It carries out the reaction beta-D-fructose 1,6-bisphosphate + H2O = beta-D-fructose 6-phosphate + phosphate. The protein operates within carbohydrate biosynthesis; Calvin cycle. This Prosthecochloris aestuarii (strain DSM 271 / SK 413) protein is Fructose-1,6-bisphosphatase class 1.